We begin with the raw amino-acid sequence, 164 residues long: R-phycoerythrin alpha chain (164 aa).

(2R,3E)-phycoerythrobilin is bound by residues Asn47, Lys81, Cys82, Arg84, His88, Arg137, Cys139, and Arg142.

Belongs to the phycobiliprotein family. Heterododecamer of 6 alpha and 6 beta chains. The basic functional unit of phycobiliproteins is a ring-shaped hexamer formed from two back-to-back trimers contacting via the alpha chain subunits. The trimers are composed of alpha/beta subunit heterodimers arranged around a three-fold axis of symmetry. The phycoerythrins also contain a gamma subunit which is located in the center of the hexamer. Post-translationally, contains two covalently linked phycoerythrobilin chromophores.

It localises to the plastid. It is found in the chloroplast thylakoid membrane. Functionally, light-harvesting photosynthetic tetrapyrrole chromophore-protein from the phycobiliprotein complex. The sequence is that of R-phycoerythrin alpha chain (rpeA) from Agarophyton chilense (Red seaweed).